A 545-amino-acid chain; its full sequence is CTP synthase (545 aa).

Positions 1 to 266 (MATNYIFVTG…DDFVCERFRL (266 aa)) are amidoligase domain. Position 14 (Ser14) interacts with CTP. A UTP-binding site is contributed by Ser14. Residues 15 to 20 (SLGKGI) and Asp72 each bind ATP. 2 residues coordinate Mg(2+): Asp72 and Glu140. CTP-binding positions include 147-149 (DIE), 187-192 (KTKPTQ), and Lys223. UTP contacts are provided by residues 187–192 (KTKPTQ) and Lys223. 239–241 (KDV) contributes to the ATP binding site. Positions 291-542 (TIGMVGKYTE…VKAAYENHKK (252 aa)) constitute a Glutamine amidotransferase type-1 domain. Gly352 contacts L-glutamine. The active-site Nucleophile; for glutamine hydrolysis is the Cys379. L-glutamine is bound by residues 380–383 (LGMQ), Glu403, and Arg470. Active-site residues include His515 and Glu517.

This sequence belongs to the CTP synthase family. In terms of assembly, homotetramer.

It catalyses the reaction UTP + L-glutamine + ATP + H2O = CTP + L-glutamate + ADP + phosphate + 2 H(+). It carries out the reaction L-glutamine + H2O = L-glutamate + NH4(+). The enzyme catalyses UTP + NH4(+) + ATP = CTP + ADP + phosphate + 2 H(+). It participates in pyrimidine metabolism; CTP biosynthesis via de novo pathway; CTP from UDP: step 2/2. Allosterically activated by GTP, when glutamine is the substrate; GTP has no effect on the reaction when ammonia is the substrate. The allosteric effector GTP functions by stabilizing the protein conformation that binds the tetrahedral intermediate(s) formed during glutamine hydrolysis. Inhibited by the product CTP, via allosteric rather than competitive inhibition. In terms of biological role, catalyzes the ATP-dependent amination of UTP to CTP with either L-glutamine or ammonia as the source of nitrogen. Regulates intracellular CTP levels through interactions with the four ribonucleotide triphosphates. The chain is CTP synthase from Haemophilus influenzae (strain ATCC 51907 / DSM 11121 / KW20 / Rd).